The sequence spans 569 residues: Proline--tRNA ligase (569 aa).

This sequence belongs to the class-II aminoacyl-tRNA synthetase family. ProS type 1 subfamily. As to quaternary structure, homodimer.

It localises to the cytoplasm. It catalyses the reaction tRNA(Pro) + L-proline + ATP = L-prolyl-tRNA(Pro) + AMP + diphosphate. In terms of biological role, catalyzes the attachment of proline to tRNA(Pro) in a two-step reaction: proline is first activated by ATP to form Pro-AMP and then transferred to the acceptor end of tRNA(Pro). As ProRS can inadvertently accommodate and process non-cognate amino acids such as alanine and cysteine, to avoid such errors it has two additional distinct editing activities against alanine. One activity is designated as 'pretransfer' editing and involves the tRNA(Pro)-independent hydrolysis of activated Ala-AMP. The other activity is designated 'posttransfer' editing and involves deacylation of mischarged Ala-tRNA(Pro). The misacylated Cys-tRNA(Pro) is not edited by ProRS. In Endomicrobium trichonymphae, this protein is Proline--tRNA ligase.